The sequence spans 451 residues: Crh-like protein 2 (451 aa).

An N-terminal signal peptide occupies residues 1-21 (MQFNSLVLLAGATILSPFVQA). The GH16 domain maps to 22-241 (QTWTTCNPLN…FTKVPFTMYV (220 aa)). C27 and C34 are disulfide-bonded. 4 N-linked (GlcNAc...) asparagine glycosylation sites follow: N31, N43, N49, and N59. The Nucleophile role is filled by E121. The active-site Proton donor is the E125. E125 is a binding site for chitin. 3 N-linked (GlcNAc...) asparagine glycosylation sites follow: N130, N143, and N165. Residues R206, W210, and T222 each coordinate chitin. Residue N273 is glycosylated (N-linked (GlcNAc...) asparagine). A helical transmembrane segment spans residues 305-325 (VYCGGGAAVAALVSAFLFTFL). N-linked (GlcNAc...) asparagine glycosylation is present at N366.

It belongs to the glycosyl hydrolase 16 family. CRH1 subfamily. As to quaternary structure, forms homodimers as well as heterodimers with other crh protein members crh1 and crh3. Dimerization may be necessary for the transglycosylation activity.

The protein resides in the membrane. The catalysed reaction is Random endo-hydrolysis of N-acetyl-beta-D-glucosaminide (1-&gt;4)-beta-linkages in chitin and chitodextrins.. Functionally, dual chitinase/transglycosylase that plays a role in cell wall architecture. Chitinase and transglycosylase activities are coupled. Required for the polysaccharide cross-linking at the septa and the cell wall. More specifically, transfers chitin to 1,6-beta-glucan in the cell wall. In Botryotinia fuckeliana (strain B05.10) (Noble rot fungus), this protein is Crh-like protein 2.